We begin with the raw amino-acid sequence, 1017 residues long: Dopamine dehydroxylase (1017 aa).

The segment at residues 1–34 (MGNLTMSRRTFVKTAAITGAAAAAFGASTHTALA) is a signal peptide (tat-type signal). A 4Fe-4S Mo/W bis-MGD-type domain is found at 45 to 103 (DTVAVKTCCRGCGKMECGVKVIVQNGRAIRVEGDEGAFQSMGNCCTKSQSSIQAAYHPD). Residues Cys-53, Cys-56, Cys-61, and Cys-89 each contribute to the [4Fe-4S] cluster site. Catalysis depends on Lys-91, which acts as the Electron donor/acceptor.

The protein belongs to the prokaryotic molybdopterin-containing oxidoreductase family. The cofactor is [4Fe-4S] cluster. Requires Mo-bis(molybdopterin guanine dinucleotide) as cofactor. Post-translationally, predicted to be exported by the Tat system. The position of the signal peptide cleavage has not been experimentally proven.

It carries out the reaction dopamine + AH2 = 3-tyramine + A + H2O. In terms of biological role, involved in drug metabolism, as part of an interspecies gut bacterial pathway for Levodopa (L-dopa) metabolism, acting on dopamine produced by Enterecoccus L-dopa decarboxylase. Removes the para hydroxyl group of dopamine to produce m-tyramine (3-tyramine). It is possible that dopamine dehydroxylation influences the multiple side effects of L-dopa administration linked to dopamine production in the treatment of Parkinson's disease. The sequence is that of Dopamine dehydroxylase from Eggerthella lenta (Eubacterium lentum).